A 335-amino-acid polypeptide reads, in one-letter code: DNA-directed RNA polymerase subunit alpha (335 aa).

The alpha N-terminal domain (alpha-NTD) stretch occupies residues 1–231 (MVREKITVST…DLLIPFLHTK (231 aa)). The segment at 263 to 335 (KKMALKSIFI…FVIDLPKNKF (73 aa)) is alpha C-terminal domain (alpha-CTD).

This sequence belongs to the RNA polymerase alpha chain family. In plastids the minimal PEP RNA polymerase catalytic core is composed of four subunits: alpha, beta, beta', and beta''. When a (nuclear-encoded) sigma factor is associated with the core the holoenzyme is formed, which can initiate transcription.

It is found in the plastid. It localises to the chloroplast. It catalyses the reaction RNA(n) + a ribonucleoside 5'-triphosphate = RNA(n+1) + diphosphate. Its function is as follows. DNA-dependent RNA polymerase catalyzes the transcription of DNA into RNA using the four ribonucleoside triphosphates as substrates. This is DNA-directed RNA polymerase subunit alpha from Helianthus annuus (Common sunflower).